The primary structure comprises 280 residues: Large ribosomal subunit protein uL2 (280 aa).

Disordered regions lie at residues 29 to 58 (PEKS…GGGH) and 225 to 280 (VMNP…NKKR). The span at 45-58 (SHGHITTRHRGGGH) shows a compositional bias: basic residues. Over residues 253–269 (KEGRTRKPKRYSDDMIV) the composition is skewed to basic and acidic residues. Residues 270–280 (RRRRANKNKKR) are compositionally biased toward basic residues.

It belongs to the universal ribosomal protein uL2 family. Part of the 50S ribosomal subunit. Forms a bridge to the 30S subunit in the 70S ribosome.

Its function is as follows. One of the primary rRNA binding proteins. Required for association of the 30S and 50S subunits to form the 70S ribosome, for tRNA binding and peptide bond formation. It has been suggested to have peptidyltransferase activity; this is somewhat controversial. Makes several contacts with the 16S rRNA in the 70S ribosome. In Corynebacterium glutamicum (strain R), this protein is Large ribosomal subunit protein uL2.